The sequence spans 185 residues: Elongation factor P 1 (185 aa).

It belongs to the elongation factor P family.

It is found in the cytoplasm. It participates in protein biosynthesis; polypeptide chain elongation. Involved in peptide bond synthesis. Stimulates efficient translation and peptide-bond synthesis on native or reconstituted 70S ribosomes in vitro. Probably functions indirectly by altering the affinity of the ribosome for aminoacyl-tRNA, thus increasing their reactivity as acceptors for peptidyl transferase. This chain is Elongation factor P 1 (efp1), found in Chlamydia caviae (strain ATCC VR-813 / DSM 19441 / 03DC25 / GPIC) (Chlamydophila caviae).